A 382-amino-acid chain; its full sequence is Cell division protein FtsZ (382 aa).

GTP is bound by residues 21 to 25 (GGGSN), 108 to 110 (GTG), Glu139, Arg143, and Asp187. A disordered region spans residues 322–382 (RAQQQSNFNR…FLRNRRRKSR (61 aa)). The segment covering 340 to 352 (KSKEKEAEKKEPR) has biased composition (basic and acidic residues).

It belongs to the FtsZ family. In terms of assembly, homodimer. Polymerizes to form a dynamic ring structure in a strictly GTP-dependent manner. Interacts directly with several other division proteins.

The protein resides in the cytoplasm. In terms of biological role, essential cell division protein that forms a contractile ring structure (Z ring) at the future cell division site. The regulation of the ring assembly controls the timing and the location of cell division. One of the functions of the FtsZ ring is to recruit other cell division proteins to the septum to produce a new cell wall between the dividing cells. Binds GTP and shows GTPase activity. The polypeptide is Cell division protein FtsZ (Halalkalibacterium halodurans (strain ATCC BAA-125 / DSM 18197 / FERM 7344 / JCM 9153 / C-125) (Bacillus halodurans)).